A 264-amino-acid chain; its full sequence is uncharacterized protein (264 aa).

Helical transmembrane passes span 1-21 (MLLG…SVSL), 43-63 (FFGV…NGFV), 95-115 (VVGL…LSSL), 146-166 (IATW…LGGL), 181-201 (GWLA…QPFV), and 215-235 (IVAN…MFFP).

It to M.pneumoniae MPN_308 C-terminal region.

The protein resides in the cell membrane. This is an uncharacterized protein from Mycoplasma pneumoniae (strain ATCC 29342 / M129 / Subtype 1) (Mycoplasmoides pneumoniae).